The following is a 255-amino-acid chain: Ribonuclease HII (255 aa).

The RNase H type-2 domain maps to 72–255 (RLIAGVDEVG…KTFAPVQSFR (184 aa)). Residues aspartate 78, glutamate 79, and aspartate 170 each contribute to the a divalent metal cation site.

This sequence belongs to the RNase HII family. Requires Mn(2+) as cofactor. Mg(2+) is required as a cofactor.

Its subcellular location is the cytoplasm. The enzyme catalyses Endonucleolytic cleavage to 5'-phosphomonoester.. In terms of biological role, endonuclease that specifically degrades the RNA of RNA-DNA hybrids. This Bacillus subtilis (strain 168) protein is Ribonuclease HII (rnhB).